Consider the following 39-residue polypeptide: Cecropin (39 aa).

It is found in the secreted. Antibacterial peptide active against Gram-negative bacterium E.coli. Has no activity against Gram-positive bacterium M.luteus. Weakly active against M.luteus. This Calliphora vicina (Blue blowfly) protein is Cecropin.